The following is a 420-amino-acid chain: Argininosuccinate synthase (420 aa).

23-31 (AYSGGLDTS) provides a ligand contact to ATP. Residue Y102 coordinates L-citrulline. G132 is a binding site for ATP. Residues T134, N138, and D139 each coordinate L-aspartate. Residue N138 coordinates L-citrulline. Residues R142, S190, E274, and Y286 each coordinate L-citrulline.

It belongs to the argininosuccinate synthase family. Type 1 subfamily. As to quaternary structure, homotetramer.

The protein localises to the cytoplasm. The enzyme catalyses L-citrulline + L-aspartate + ATP = 2-(N(omega)-L-arginino)succinate + AMP + diphosphate + H(+). It functions in the pathway amino-acid biosynthesis; L-arginine biosynthesis; L-arginine from L-ornithine and carbamoyl phosphate: step 2/3. The sequence is that of Argininosuccinate synthase from Renibacterium salmoninarum (strain ATCC 33209 / DSM 20767 / JCM 11484 / NBRC 15589 / NCIMB 2235).